A 307-amino-acid polypeptide reads, in one-letter code: Ornithine carbamoyltransferase (307 aa).

Residues 55–58 (STRT), Gln-82, Arg-106, and 133–136 (HPCQ) contribute to the carbamoyl phosphate site. L-ornithine contacts are provided by residues Asn-164, Asp-224, and 228–229 (SM). Residues 263–264 (CL) and Arg-291 contribute to the carbamoyl phosphate site.

The protein belongs to the aspartate/ornithine carbamoyltransferase superfamily. OTCase family.

It localises to the cytoplasm. The enzyme catalyses carbamoyl phosphate + L-ornithine = L-citrulline + phosphate + H(+). Its pathway is amino-acid biosynthesis; L-arginine biosynthesis; L-arginine from L-ornithine and carbamoyl phosphate: step 1/3. Functionally, reversibly catalyzes the transfer of the carbamoyl group from carbamoyl phosphate (CP) to the N(epsilon) atom of ornithine (ORN) to produce L-citrulline. In Bradyrhizobium diazoefficiens (strain JCM 10833 / BCRC 13528 / IAM 13628 / NBRC 14792 / USDA 110), this protein is Ornithine carbamoyltransferase.